The following is a 106-amino-acid chain: UPF0060 membrane protein AZC_0909 (106 aa).

4 helical membrane-spanning segments follow: residues 4 to 24, 27 to 47, 58 to 78, and 84 to 104; these read PLFA…WHVV, GGSP…AALL, AFAA…WAAE, and RFDA…LFAP.

This sequence belongs to the UPF0060 family.

It is found in the cell inner membrane. The protein is UPF0060 membrane protein AZC_0909 of Azorhizobium caulinodans (strain ATCC 43989 / DSM 5975 / JCM 20966 / LMG 6465 / NBRC 14845 / NCIMB 13405 / ORS 571).